Reading from the N-terminus, the 342-residue chain is Aristolochene synthase prx2 (342 aa).

Mg(2+) is bound by residues aspartate 115, asparagine 244, serine 248, and glutamate 252. (2E,6E)-farnesyl diphosphate-binding residues include arginine 340 and tyrosine 341.

It belongs to the terpene synthase family. Homodimer. Mg(2+) serves as cofactor.

The enzyme catalyses (2E,6E)-farnesyl diphosphate = (+)-aristolochene + diphosphate. Its pathway is sesquiterpene biosynthesis; aristolochene biosynthesis; aristolochene from farnesyl diphosphate: step 1/1. Its function is as follows. Aristolochene synthase; part of the gene cluster that mediates the biosynthesis of PR-toxin, a bicyclic sesquiterpene belonging to the eremophilane class and acting as a mycotoxin. The first step of the pathway is catalyzed by the aristolochene synthase which performs the cyclization of trans,trans-farnesyl diphosphate (FPP) to the bicyclic sesquiterpene aristolochene. Following the formation of aristolochene, the non-oxygenated aristolochene is converted to the trioxygenated intermediate eremofortin B, via 7-epi-neopetasone. This conversion appears to involve three enzymes, a hydroxysterol oxidase-like enzyme, the quinone-oxidase prx3 that forms the quinone-type-structure in the bicyclic nucleus of aristolochene with the C8-oxo group and the C-3 hydroxyl group, and the P450 monooxygenase prx9 that introduces the epoxide at the double bond between carbons 1 and 2. No monoxy or dioxy-intermediates have been reported to be released to the broth, so these three early oxidative reactions may be coupled together. Eremofortin B is further oxidized by another P450 monooxygenase, that introduces a second epoxide between carbons 7 and 11 prior to acetylation to eremofortin A by the acetyltransferase prx11. The second epoxidation may be performed by a second P450 monooxygenase. After the acetylation step, the conversion of eremofortin A to eremofortin C and then to PR-toxin requires only two enzymes. First the conversion of eremofortin A to eremofortin C proceeds by oxidation of the side chain of the molecule at C-12 and is catalyzed by the short-chain oxidoreductase prx1. The cytochrome P450 monooxygenase prx8 also plays a role in this step. The primary alcohol formed at C-12 is finally oxidized by the short-chain alcohol dehydrogenase prx4 that forms PR-toxin. In Penicillium rubens (strain ATCC 28089 / DSM 1075 / NRRL 1951 / Wisconsin 54-1255) (Penicillium chrysogenum), this protein is Aristolochene synthase prx2.